A 356-amino-acid polypeptide reads, in one-letter code: Dual-specificity RNA methyltransferase RlmN (356 aa).

Glu92 functions as the Proton acceptor in the catalytic mechanism. In terms of domain architecture, Radical SAM core spans 98 to 327 (EKNRGTLCIS…HQGIRTMTRR (230 aa)). Cys105 and Cys337 are disulfide-bonded. 3 residues coordinate [4Fe-4S] cluster: Cys112, Cys116, and Cys119. S-adenosyl-L-methionine-binding positions include 162-163 (GE), Ser194, 216-218 (SLH), and Asn294. Residue Cys337 is the S-methylcysteine intermediate of the active site.

Belongs to the radical SAM superfamily. RlmN family. [4Fe-4S] cluster serves as cofactor.

Its subcellular location is the cytoplasm. It catalyses the reaction adenosine(2503) in 23S rRNA + 2 reduced [2Fe-2S]-[ferredoxin] + 2 S-adenosyl-L-methionine = 2-methyladenosine(2503) in 23S rRNA + 5'-deoxyadenosine + L-methionine + 2 oxidized [2Fe-2S]-[ferredoxin] + S-adenosyl-L-homocysteine. The enzyme catalyses adenosine(37) in tRNA + 2 reduced [2Fe-2S]-[ferredoxin] + 2 S-adenosyl-L-methionine = 2-methyladenosine(37) in tRNA + 5'-deoxyadenosine + L-methionine + 2 oxidized [2Fe-2S]-[ferredoxin] + S-adenosyl-L-homocysteine. Functionally, specifically methylates position 2 of adenine 2503 in 23S rRNA and position 2 of adenine 37 in tRNAs. m2A2503 modification seems to play a crucial role in the proofreading step occurring at the peptidyl transferase center and thus would serve to optimize ribosomal fidelity. This chain is Dual-specificity RNA methyltransferase RlmN, found in Ruthia magnifica subsp. Calyptogena magnifica.